The chain runs to 503 residues: AMP phosphorylase (503 aa).

AMP is bound by residues Gly-168, Ser-194–Ser-199, and Thr-203. The active-site Proton donor is Asp-256. AMP-binding residues include Ser-264 and Lys-288.

This sequence belongs to the thymidine/pyrimidine-nucleoside phosphorylase family. Type 2 subfamily.

It carries out the reaction AMP + phosphate = alpha-D-ribose 1,5-bisphosphate + adenine. It catalyses the reaction CMP + phosphate = cytosine + alpha-D-ribose 1,5-bisphosphate. The catalysed reaction is UMP + phosphate = alpha-D-ribose 1,5-bisphosphate + uracil. Its function is as follows. Catalyzes the conversion of AMP and phosphate to adenine and ribose 1,5-bisphosphate (R15P). Exhibits phosphorylase activity toward CMP and UMP in addition to AMP. Functions in an archaeal AMP degradation pathway, together with R15P isomerase and RubisCO. The sequence is that of AMP phosphorylase from Thermococcus sibiricus (strain DSM 12597 / MM 739).